A 529-amino-acid chain; its full sequence is Peptide chain release factor 3 (529 aa).

The region spanning 11-280 is the tr-type G domain; it reads AKRRTFAIIS…GLVEWAPAPM (270 aa). GTP is bound by residues 20–27, 88–92, and 142–145; these read SHPDAGKT, DTPGH, and NKLD.

This sequence belongs to the TRAFAC class translation factor GTPase superfamily. Classic translation factor GTPase family. PrfC subfamily.

It is found in the cytoplasm. In terms of biological role, increases the formation of ribosomal termination complexes and stimulates activities of RF-1 and RF-2. It binds guanine nucleotides and has strong preference for UGA stop codons. It may interact directly with the ribosome. The stimulation of RF-1 and RF-2 is significantly reduced by GTP and GDP, but not by GMP. The chain is Peptide chain release factor 3 from Klebsiella pneumoniae subsp. pneumoniae (strain ATCC 700721 / MGH 78578).